We begin with the raw amino-acid sequence, 154 residues long: MSILFYVMFLAYLRGVQGNSMDQRSLPEDSLNSLIIKLIQADILKNKLSKQMVDVKENYQSTLPKAEDSARESAKSEFQPVMVMGPELLWYQRRYNSSRFLLSDSIPLESPPLFLIEVHLANPMVNSRSPRRKRYAEHKSHRGEYSVCDSESLW.

An N-terminal signal peptide occupies residues 1–18 (MSILFYVMFLAYLRGVQG). The propeptide occupies 19 to 134 (NSMDQRSLPE…VNSRSPRRKR (116 aa)).

It belongs to the NGF-beta family.

It is found in the secreted. Functionally, seems to promote the survival of visceral and proprioceptive sensory neurons. The chain is Neurotrophin-3 (NTF3) from Cervus elaphus (Red deer).